Consider the following 212-residue polypeptide: Guanylate kinase (212 aa).

The 179-residue stretch at 14–192 folds into the Guanylate kinase-like domain; it reads GTALVICAPS…AYDELRATYL (179 aa). Residue 21–28 coordinates ATP; it reads APSGTGKT.

The protein belongs to the guanylate kinase family.

The protein resides in the cytoplasm. It carries out the reaction GMP + ATP = GDP + ADP. In terms of biological role, essential for recycling GMP and indirectly, cGMP. In Lawsonia intracellularis (strain PHE/MN1-00), this protein is Guanylate kinase.